Reading from the N-terminus, the 194-residue chain is Putative 3-methyladenine DNA glycosylase (194 aa).

The protein belongs to the DNA glycosylase MPG family.

The sequence is that of Putative 3-methyladenine DNA glycosylase from Synechococcus elongatus (strain ATCC 33912 / PCC 7942 / FACHB-805) (Anacystis nidulans R2).